Consider the following 194-residue polypeptide: Crossover junction endodeoxyribonuclease RuvC (194 aa).

Catalysis depends on residues Asp-7, Glu-68, and Asp-141. Residues Asp-7, Glu-68, and Asp-141 each coordinate Mg(2+).

Belongs to the RuvC family. In terms of assembly, homodimer which binds Holliday junction (HJ) DNA. The HJ becomes 2-fold symmetrical on binding to RuvC with unstacked arms; it has a different conformation from HJ DNA in complex with RuvA. In the full resolvosome a probable DNA-RuvA(4)-RuvB(12)-RuvC(2) complex forms which resolves the HJ. Mg(2+) serves as cofactor.

The protein localises to the cytoplasm. It catalyses the reaction Endonucleolytic cleavage at a junction such as a reciprocal single-stranded crossover between two homologous DNA duplexes (Holliday junction).. The RuvA-RuvB-RuvC complex processes Holliday junction (HJ) DNA during genetic recombination and DNA repair. Endonuclease that resolves HJ intermediates. Cleaves cruciform DNA by making single-stranded nicks across the HJ at symmetrical positions within the homologous arms, yielding a 5'-phosphate and a 3'-hydroxyl group; requires a central core of homology in the junction. The consensus cleavage sequence is 5'-(A/T)TT(C/G)-3'. Cleavage occurs on the 3'-side of the TT dinucleotide at the point of strand exchange. HJ branch migration catalyzed by RuvA-RuvB allows RuvC to scan DNA until it finds its consensus sequence, where it cleaves and resolves the cruciform DNA. This is Crossover junction endodeoxyribonuclease RuvC from Bifidobacterium longum (strain DJO10A).